The chain runs to 38 residues: MPTIQQLIRNARQPIENRKKSPALRGCPQRRGVCARVY.

Positions 1–26 are disordered; it reads MPTIQQLIRNARQPIENRKKSPALRG.

This sequence belongs to the universal ribosomal protein uS12 family. Part of the 30S ribosomal subunit.

It is found in the plastid. It localises to the chloroplast. Its function is as follows. With S4 and S5 plays an important role in translational accuracy. Located at the interface of the 30S and 50S subunits. The chain is Small ribosomal subunit protein uS12c (rps12) from Pinus contorta (Shore pine).